Here is a 381-residue protein sequence, read N- to C-terminus: Metallophosphoesterase 1 (381 aa).

A helical transmembrane segment spans residues 15–35 (LIFAFVSVFVFCEYVIYYLVI). A divalent metal cation is bound by residues D59, D101, N139, H234, H288, and H290. Residues 341 to 361 (TVLVVYCSSCLIIALITLIHL) traverse the membrane as a helical segment. Residues 377 to 381 (KHKTL) carry the Di-lysine motif motif.

The protein belongs to the metallophosphoesterase superfamily. MPPE1 family. It depends on Mn(2+) as a cofactor.

Its subcellular location is the endoplasmic reticulum-Golgi intermediate compartment membrane. Its function is as follows. Metallophosphoesterase that catalyzes the removal of a side-chain ethanolamine-phosphate (EtNP) from the second mannose of the GPI-anchor protein intermediate. Participates in the glycan remodeling steps of GPI-anchor maturation to allow an efficient transport of GPI-anchor proteins from the endoplasmic reticulum to the Golgi. In Danio rerio (Zebrafish), this protein is Metallophosphoesterase 1.